The following is an 809-amino-acid chain: Lon protease (809 aa).

A Lon N-terminal domain is found at 20–216 (LPLLALRDVV…ELMNYLMNQS (197 aa)). Residue 369–376 (GPPGVGKT) participates in ATP binding. Residues 606–787 (EAQVGRVNGL…DEILPLALTS (182 aa)) enclose the Lon proteolytic domain. Catalysis depends on residues serine 693 and lysine 736.

It belongs to the peptidase S16 family. As to quaternary structure, homohexamer. Organized in a ring with a central cavity.

Its subcellular location is the cytoplasm. The enzyme catalyses Hydrolysis of proteins in presence of ATP.. In terms of biological role, ATP-dependent serine protease that mediates the selective degradation of mutant and abnormal proteins as well as certain short-lived regulatory proteins. Required for cellular homeostasis and for survival from DNA damage and developmental changes induced by stress. Degrades polypeptides processively to yield small peptide fragments that are 5 to 10 amino acids long. Binds to DNA in a double-stranded, site-specific manner. This is Lon protease from Acinetobacter baumannii (strain AB307-0294).